Here is a 184-residue protein sequence, read N- to C-terminus: NADH-quinone oxidoreductase subunit B (184 aa).

The [4Fe-4S] cluster site is built by cysteine 37, cysteine 38, cysteine 103, and cysteine 132.

Belongs to the complex I 20 kDa subunit family. NDH-1 is composed of 14 different subunits. Subunits NuoB, C, D, E, F, and G constitute the peripheral sector of the complex. Requires [4Fe-4S] cluster as cofactor.

Its subcellular location is the cell membrane. It catalyses the reaction a quinone + NADH + 5 H(+)(in) = a quinol + NAD(+) + 4 H(+)(out). NDH-1 shuttles electrons from NADH, via FMN and iron-sulfur (Fe-S) centers, to quinones in the respiratory chain. The immediate electron acceptor for the enzyme in this species is believed to be a menaquinone. Couples the redox reaction to proton translocation (for every two electrons transferred, four hydrogen ions are translocated across the cytoplasmic membrane), and thus conserves the redox energy in a proton gradient. The sequence is that of NADH-quinone oxidoreductase subunit B from Mycolicibacterium smegmatis (strain ATCC 700084 / mc(2)155) (Mycobacterium smegmatis).